The primary structure comprises 197 residues: Small ribosomal subunit protein uS4c (197 aa).

In terms of domain architecture, S4 RNA-binding spans 92-153 (MRLDAVVYRL…APIVEHAKTF (62 aa)).

The protein belongs to the universal ribosomal protein uS4 family. Part of the 30S ribosomal subunit. Contacts protein S5. The interaction surface between S4 and S5 is involved in control of translational fidelity.

The protein localises to the plastid. It is found in the chloroplast. Its function is as follows. One of the primary rRNA binding proteins, it binds directly to 16S rRNA where it nucleates assembly of the body of the 30S subunit. In terms of biological role, with S5 and S12 plays an important role in translational accuracy. This is Small ribosomal subunit protein uS4c (rps4) from Ostreococcus tauri.